A 752-amino-acid polypeptide reads, in one-letter code: Primary amine oxidase (752 aa).

The N-terminal stretch at 1 to 27 (MAILSPRKTALALAVALSCAWQSPAFA) is a signal peptide. Residues 408 to 419 (YLDSGDYGMGTL) and 490 to 495 (VGNYDY) each bind substrate. Residue D410 is the Proton acceptor of the active site. Y493 (schiff-base intermediate with substrate; via topaquinone) is an active-site residue. Y493 bears the 2',4',5'-topaquinone mark. The Cu cation site is built by H551 and H553. Residues D560, L561, D562, E600, Y694, D697, E699, and D705 each coordinate Ca(2+). Residue D560 participates in Mn(2+) binding. A Mn(2+)-binding site is contributed by D562. Mn(2+) is bound at residue D705. H716 serves as a coordination point for Cu cation.

It belongs to the copper/topaquinone oxidase family. Homodimer. Requires Cu cation as cofactor. The cofactor is Ca(2+). L-topaquinone is required as a cofactor. Mn(2+) serves as cofactor. Post-translationally, topaquinone (TPQ) is generated by copper-dependent autoxidation of a specific tyrosyl residue.

It is found in the periplasm. It catalyses the reaction a primary methyl amine + O2 + H2O = an aldehyde + H2O2 + NH4(+). Functionally, active on tyramine, tryptamine, beta-phenethylamine and dopamine. This chain is Primary amine oxidase (maoA), found in Klebsiella michiganensis (strain ATCC 8724 / DSM 4798 / JCM 20051 / NBRC 3318 / NRRL B-199 / KCTC 1686 / BUCSAV 143 / CCM 1901).